Reading from the N-terminus, the 89-residue chain is Small ribosomal subunit protein uS15 (89 aa).

Residues 1–24 (MSLDTTEKQQLINSHQTHATDTGS) form a disordered region. The segment covering 8 to 24 (KQQLINSHQTHATDTGS) has biased composition (polar residues).

It belongs to the universal ribosomal protein uS15 family. Part of the 30S ribosomal subunit. Forms a bridge to the 50S subunit in the 70S ribosome, contacting the 23S rRNA.

One of the primary rRNA binding proteins, it binds directly to 16S rRNA where it helps nucleate assembly of the platform of the 30S subunit by binding and bridging several RNA helices of the 16S rRNA. In terms of biological role, forms an intersubunit bridge (bridge B4) with the 23S rRNA of the 50S subunit in the ribosome. The protein is Small ribosomal subunit protein uS15 of Synechococcus sp. (strain CC9311).